We begin with the raw amino-acid sequence, 305 residues long: Aquaporin-1 (305 aa).

Residues 1-34 (MSSNDSNDTDKQHTRLDPTGVDDAYIPPEQPETK) form a disordered region. Topologically, residues 1-48 (MSSNDSNDTDKQHTRLDPTGVDDAYIPPEQPETKHHRFKISRDTLRDH) are cytoplasmic. A helical membrane pass occupies residues 49–69 (FIAAVGEFCGTFMFLWCAYVI). At 70-91 (CNVANHDVALVAAPDGSHPGQL) the chain is on the extracellular side. Residues 92–112 (IMIAIGFGFSVMFSIWCFAGV) form a helical membrane-spanning segment. At 113–136 (SGGALNPAMSLSLCLARAVSPTRC) the chain is on the cytoplasmic side. The NPA 1 signature appears at 118 to 120 (NPA). A helical transmembrane segment spans residues 137-157 (VVMWVSQIVAGMAAGGAASAM). Residues 158–176 (TPGEVLFANSLGLGCSRTR) lie on the Extracellular side of the membrane. Residues 177–197 (GLFLEMFGTAILCLTVLMTAV) traverse the membrane as a helical segment. Residues 198-203 (EKRETN) lie on the Cytoplasmic side of the membrane. The chain crosses the membrane as a helical span at residues 204–224 (FMAALPIGISLFIAHVALTAY). Topologically, residues 225-248 (TGTGVNPARSLGAAVAARYFPHYH) are extracellular. The short motif at 230–232 (NPA) is the NPA 2 element. Residues 249-269 (WIYWIGTLLGSILAWSVWQLL) traverse the membrane as a helical segment. Over 270–305 (QILDYTTYVTAEKAASTKEKAQKKGETSSSSAVAEV) the chain is Cytoplasmic. The segment covering 286–295 (TKEKAQKKGE) has biased composition (basic and acidic residues). A disordered region spans residues 286-305 (TKEKAQKKGETSSSSAVAEV). Positions 296–305 (TSSSSAVAEV) are enriched in polar residues.

It belongs to the MIP/aquaporin (TC 1.A.8) family.

The protein resides in the endoplasmic reticulum membrane. Its subcellular location is the cell membrane. Water channel required to facilitate the transport of water across membranes. Involved in sporulation, freeze tolerance and osmotolerance. Is non-functional in most laboratory strains. This chain is Aquaporin-1 (AQY1), found in Saccharomyces cerevisiae (strain ATCC 204508 / S288c) (Baker's yeast).